The primary structure comprises 75 residues: Small ribosomal subunit protein bS18 (75 aa).

It belongs to the bacterial ribosomal protein bS18 family. Part of the 30S ribosomal subunit. Forms a tight heterodimer with protein bS6.

Functionally, binds as a heterodimer with protein bS6 to the central domain of the 16S rRNA, where it helps stabilize the platform of the 30S subunit. This is Small ribosomal subunit protein bS18 from Clostridioides difficile (strain 630) (Peptoclostridium difficile).